A 263-amino-acid polypeptide reads, in one-letter code: NADH dehydrogenase [ubiquinone] iron-sulfur protein 3, mitochondrial (263 aa).

The N-terminal 35 residues, 1–35, are a transit peptide targeting the mitochondrion; that stretch reads MAAAAARVWCRGLLGAASVGRGAGRPSVLWQHVRR.

The protein belongs to the complex I 30 kDa subunit family. Core subunit of respiratory chain NADH dehydrogenase (Complex I) which is composed of 45 different subunits. Interacts with NDUFAF3. Interacts with RAB5IF. Found in subcomplexes containing subunits NDUFS2, MT-ND1 and NDUFA13.

It localises to the mitochondrion inner membrane. It carries out the reaction a ubiquinone + NADH + 5 H(+)(in) = a ubiquinol + NAD(+) + 4 H(+)(out). In terms of biological role, core subunit of the mitochondrial membrane respiratory chain NADH dehydrogenase (Complex I) which catalyzes electron transfer from NADH through the respiratory chain, using ubiquinone as an electron acceptor. Essential for the catalytic activity and assembly of complex I. This chain is NADH dehydrogenase [ubiquinone] iron-sulfur protein 3, mitochondrial (Ndufs3), found in Mus musculus (Mouse).